The primary structure comprises 920 residues: Protein FAN (920 aa).

The region spanning 176 to 247 (RLARTSFDKN…QDVRRIYKRR (72 aa)) is the GRAM domain. The BEACH-type PH domain maps to 189 to 286 (SVSEKLHMEC…DRDDLYFYIA (98 aa)). In terms of domain architecture, BEACH spans 290 to 575 (EHHAAEHTAE…QLFVTPHPRR (286 aa)). WD repeat units follow at residues 631–661 (IHKEAVTGIAVSCNGSSVFTTSQDSTLKMFS), 673–703 (FSNMALSSCLLLPGDTTVISSSWDNNVYFYS), 715–743 (GHDDAVSKICWHNDRLYSGSWDSTVKVWS), 764–794 (EHDVSVNTINLNAVSTLLVSGTKEGMVNIWD), 806–836 (CHSGTVCDAAFSPDSRHILSTGVDGCLNVID), and 887–917 (GHTGAVTCMWMNEQCSSIITGGEDRQIMFWK).

Couples the p55 TNF-receptor (TNF-R55 / TNFR1) to neutral sphingomyelinase (N-SMASE). Specifically binds to the N-smase activation domain of TNF-R55. May regulate ceramide production by N-SMASE. The chain is Protein FAN (Nsmaf) from Mus musculus (Mouse).